Reading from the N-terminus, the 459-residue chain is Ribosomal protein uS12 methylthiotransferase RimO (459 aa).

A disordered region spans residues M1–T28. The region spanning P27 to P137 is the MTTase N-terminal domain. The [4Fe-4S] cluster site is built by C36, C72, C101, C168, C172, and C175. The region spanning L154–A387 is the Radical SAM core domain. Positions A390 to P457 constitute a TRAM domain.

The protein belongs to the methylthiotransferase family. RimO subfamily. It depends on [4Fe-4S] cluster as a cofactor.

It is found in the cytoplasm. It carries out the reaction L-aspartate(89)-[ribosomal protein uS12]-hydrogen + (sulfur carrier)-SH + AH2 + 2 S-adenosyl-L-methionine = 3-methylsulfanyl-L-aspartate(89)-[ribosomal protein uS12]-hydrogen + (sulfur carrier)-H + 5'-deoxyadenosine + L-methionine + A + S-adenosyl-L-homocysteine + 2 H(+). In terms of biological role, catalyzes the methylthiolation of an aspartic acid residue of ribosomal protein uS12. The sequence is that of Ribosomal protein uS12 methylthiotransferase RimO from Roseobacter denitrificans (strain ATCC 33942 / OCh 114) (Erythrobacter sp. (strain OCh 114)).